The following is a 126-amino-acid chain: Large ribosomal subunit protein bL17 (126 aa).

This sequence belongs to the bacterial ribosomal protein bL17 family. In terms of assembly, part of the 50S ribosomal subunit. Contacts protein L32.

This is Large ribosomal subunit protein bL17 from Aliivibrio fischeri (strain ATCC 700601 / ES114) (Vibrio fischeri).